We begin with the raw amino-acid sequence, 740 residues long: NAD(P)H-quinone oxidoreductase subunit 5, chloroplastic (740 aa).

16 helical membrane-spanning segments follow: residues 9 to 29 (WIIP…LILF), 40 to 60 (WAFQ…YLSI), 89 to 109 (IDPL…MVLI), 125 to 145 (FAYM…SNLI), 147 to 167 (IYIF…FWFT), 185 to 205 (GDFG…SFEF), 219 to 239 (NEVN…GAVA), 258 to 278 (TPIS…FLVA), 286 to 306 (VIPY…LLGA), 327 to 347 (LGYM…FHLI), 354 to 374 (ALLF…VGYS), 396 to 416 (ITFL…CFWS), 425 to 445 (WLYS…TAFY), 543 to 563 (LFPI…GIPF), 602 to 622 (VLSV…YKPI), and 718 to 738 (YLFL…LFFL).

This sequence belongs to the complex I subunit 5 family. NDH is composed of at least 16 different subunits, 5 of which are encoded in the nucleus.

The protein resides in the plastid. Its subcellular location is the chloroplast thylakoid membrane. The catalysed reaction is a plastoquinone + NADH + (n+1) H(+)(in) = a plastoquinol + NAD(+) + n H(+)(out). The enzyme catalyses a plastoquinone + NADPH + (n+1) H(+)(in) = a plastoquinol + NADP(+) + n H(+)(out). Its function is as follows. NDH shuttles electrons from NAD(P)H:plastoquinone, via FMN and iron-sulfur (Fe-S) centers, to quinones in the photosynthetic chain and possibly in a chloroplast respiratory chain. The immediate electron acceptor for the enzyme in this species is believed to be plastoquinone. Couples the redox reaction to proton translocation, and thus conserves the redox energy in a proton gradient. This chain is NAD(P)H-quinone oxidoreductase subunit 5, chloroplastic (ndhF), found in Atropa belladonna (Belladonna).